The primary structure comprises 374 residues: Pectate lyase 1 (374 aa).

The N-terminal stretch at 1 to 22 (MKYLLPSAAAGLLLLAAQPTMA) is a signal peptide. A disulfide bond links Cys-93 and Cys-176. Ca(2+)-binding residues include Asp-150, Asp-152, Glu-187, and Asp-191. Residue Arg-239 is part of the active site. Cys-350 and Cys-373 are joined by a disulfide.

This sequence belongs to the polysaccharide lyase 1 family. PLADES subfamily. The cofactor is Ca(2+).

The protein resides in the secreted. It carries out the reaction Eliminative cleavage of (1-&gt;4)-alpha-D-galacturonan to give oligosaccharides with 4-deoxy-alpha-D-galact-4-enuronosyl groups at their non-reducing ends.. It participates in glycan metabolism; pectin degradation; 2-dehydro-3-deoxy-D-gluconate from pectin: step 2/5. In terms of biological role, involved in maceration and soft-rotting of plant tissue. The chain is Pectate lyase 1 (pel1) from Pectobacterium carotovorum (Erwinia carotovora).